A 549-amino-acid polypeptide reads, in one-letter code: tRNA pseudouridine synthase 1 (549 aa).

Positions Met-1–Gln-13 are enriched in low complexity. Residues Met-1 to Arg-83 are disordered. The segment covering Pro-53–Asp-73 has biased composition (basic and acidic residues). Asp-146 (nucleophile) is an active-site residue. The disordered stretch occupies residues Pro-507–Asn-549. Over residues Gly-512–Ser-524 the composition is skewed to basic and acidic residues.

It belongs to the tRNA pseudouridine synthase TruA family. Zn(2+) serves as cofactor.

It localises to the nucleus. It carries out the reaction a uridine in tRNA = a pseudouridine in tRNA. It catalyses the reaction uridine in snRNA = pseudouridine in snRNA. The enzyme catalyses a uridine in mRNA = a pseudouridine in mRNA. Functionally, formation of pseudouridine at positions 27 and 28 in the anticodon stem and loop of transfer RNAs; at positions 34 and 36 of intron-containing precursor tRNA(Ile) and at position 35 in the intron-containing tRNA(Tyr). Catalyzes pseudouridylation at position 44 in U2 snRNA. Also catalyzes pseudouridylation of mRNAs. The polypeptide is tRNA pseudouridine synthase 1 (PUS1) (Candida glabrata (strain ATCC 2001 / BCRC 20586 / JCM 3761 / NBRC 0622 / NRRL Y-65 / CBS 138) (Yeast)).